We begin with the raw amino-acid sequence, 469 residues long: Adenosylhomocysteinase (469 aa).

Substrate contacts are provided by Thr63, Asp139, and Glu164. Thr165–Thr167 contacts NAD(+). Residues Lys194 and Asp198 each coordinate substrate. Residues Asn199, Gly228–Gly233, Glu251, Asn300, Ile321–His323, and Asn375 each bind NAD(+).

The protein belongs to the adenosylhomocysteinase family. NAD(+) serves as cofactor.

The protein localises to the cytoplasm. The catalysed reaction is S-adenosyl-L-homocysteine + H2O = L-homocysteine + adenosine. Its pathway is amino-acid biosynthesis; L-homocysteine biosynthesis; L-homocysteine from S-adenosyl-L-homocysteine: step 1/1. In terms of biological role, may play a key role in the regulation of the intracellular concentration of adenosylhomocysteine. In Pseudomonas syringae pv. tomato (strain ATCC BAA-871 / DC3000), this protein is Adenosylhomocysteinase.